The chain runs to 308 residues: rRNA 2'-O-methyltransferase fibrillarin 1 (308 aa).

The disordered stretch occupies residues 1 to 68; it reads MRPPVTGGRG…PRGGMKGGSK (68 aa). Over residues 22–35 the composition is skewed to gly residues; sequence GRGFGGGRSFGGGR. Residues 42-52 are compositionally biased toward basic residues; sequence SGPRGRGRGAP. The span at 53–65 shows a compositional bias: gly residues; it reads RGRGGPPRGGMKG. Residues 156–157, 175–176, 200–201, and 220–223 each bind S-adenosyl-L-methionine; these read TT, EF, DA, and DVAQ.

It belongs to the methyltransferase superfamily. Fibrillarin family. In terms of assembly, component of box C/D small nucleolar ribonucleoprotein (snoRNP) particles. Interacts with SKP1A. As to expression, expressed in roots, leaves and flowers. Expressed in stems.

The protein resides in the nucleus. It is found in the nucleolus. It catalyses the reaction a ribonucleotide in rRNA + S-adenosyl-L-methionine = a 2'-O-methylribonucleotide in rRNA + S-adenosyl-L-homocysteine + H(+). The catalysed reaction is L-glutaminyl-[histone H2A] + S-adenosyl-L-methionine = N(5)-methyl-L-glutaminyl-[histone H2A] + S-adenosyl-L-homocysteine + H(+). S-adenosyl-L-methionine-dependent methyltransferase that has the ability to methylate both RNAs and proteins. Involved in pre-rRNA processing. Utilizes the methyl donor S-adenosyl-L-methionine to catalyze the site-specific 2'-hydroxyl methylation of ribose moieties in pre-ribosomal RNA. Site specificity is provided by a guide RNA that base pairs with the substrate. Methylation occurs at a characteristic distance from the sequence involved in base pairing with the guide RNA. Also acts as a protein methyltransferase by mediating methylation of 'Gln-105' of histone H2A (H2AQ105me), a modification that impairs binding of the FACT complex and is specifically present at 35S ribosomal DNA locus. Binds monophosphate phosphoinositides in vitro. This is rRNA 2'-O-methyltransferase fibrillarin 1 from Arabidopsis thaliana (Mouse-ear cress).